The sequence spans 311 residues: Porphobilinogen deaminase (311 aa).

S-(dipyrrolylmethanemethyl)cysteine is present on cysteine 242.

The protein belongs to the HMBS family. In terms of assembly, monomer. The cofactor is dipyrromethane.

It carries out the reaction 4 porphobilinogen + H2O = hydroxymethylbilane + 4 NH4(+). It functions in the pathway porphyrin-containing compound metabolism; protoporphyrin-IX biosynthesis; coproporphyrinogen-III from 5-aminolevulinate: step 2/4. Functionally, tetrapolymerization of the monopyrrole PBG into the hydroxymethylbilane pre-uroporphyrinogen in several discrete steps. The chain is Porphobilinogen deaminase from Baumannia cicadellinicola subsp. Homalodisca coagulata.